A 533-amino-acid chain; its full sequence is Subtilisin-like serine protease pepC (533 aa).

The signal sequence occupies residues 1 to 16 (MKGILGLSLLPLLTAA). Residues 43–136 (SYIVVFKKHV…IERDSEVHTM (94 aa)) form the Inhibitor I9 domain. Positions 145–450 (PWGLARISHR…VGIYKRNELT (306 aa)) constitute a Peptidase S8 domain. Active-site charge relay system residues include Asp-181 and His-213. Residue Asn-283 is glycosylated (N-linked (GlcNAc...) asparagine). Cys-320 and Cys-351 form a disulfide bridge. The Charge relay system role is filled by Ser-379. An N-linked (GlcNAc...) asparagine glycan is attached at Asn-435. Residues 496 to 513 (KSCSPRSLVPSTARSRMP) are compositionally biased toward polar residues. The tract at residues 496–519 (KSCSPRSLVPSTARSRMPSSHRSE) is disordered.

The protein belongs to the peptidase S8 family.

The sequence is that of Subtilisin-like serine protease pepC (pepC) from Aspergillus niger.